Reading from the N-terminus, the 267-residue chain is Sorbitol-6-phosphate 2-dehydrogenase (267 aa).

9–38 (DNVIIVTGGASGIGLAIVDELLSQGAHVQM) provides a ligand contact to NAD(+). Serine 147 contributes to the substrate binding site. Tyrosine 160 functions as the Proton acceptor in the catalytic mechanism.

It belongs to the short-chain dehydrogenases/reductases (SDR) family. Homotetramer.

The catalysed reaction is D-sorbitol 6-phosphate + NAD(+) = beta-D-fructose 6-phosphate + NADH + H(+). The protein operates within carbohydrate metabolism; D-sorbitol degradation; D-fructose 6-phosphate from D-sorbitol 6-phosphate: step 1/1. In Klebsiella pneumoniae, this protein is Sorbitol-6-phosphate 2-dehydrogenase (sorD).